The sequence spans 84 residues: Large ribosomal subunit protein bL27 (84 aa).

Positions 1 to 20 (MAHKKSGGASRNGRDSNPKY) are disordered.

It belongs to the bacterial ribosomal protein bL27 family.

This chain is Large ribosomal subunit protein bL27, found in Dictyoglomus thermophilum (strain ATCC 35947 / DSM 3960 / H-6-12).